The primary structure comprises 295 residues: Ribose-phosphate pyrophosphokinase (295 aa).

ATP contacts are provided by residues 46–48 (DGE) and 101–102 (RQ). Mg(2+) is bound by residues His-132 and Asp-171. Residue Lys-194 is part of the active site. Positions 196 and 220 each coordinate D-ribose 5-phosphate.

Belongs to the ribose-phosphate pyrophosphokinase family. Class III (archaeal) subfamily. It depends on Mg(2+) as a cofactor.

It localises to the cytoplasm. The catalysed reaction is D-ribose 5-phosphate + ATP = 5-phospho-alpha-D-ribose 1-diphosphate + AMP + H(+). Its pathway is metabolic intermediate biosynthesis; 5-phospho-alpha-D-ribose 1-diphosphate biosynthesis; 5-phospho-alpha-D-ribose 1-diphosphate from D-ribose 5-phosphate (route I): step 1/1. Its function is as follows. Involved in the biosynthesis of the central metabolite phospho-alpha-D-ribosyl-1-pyrophosphate (PRPP) via the transfer of pyrophosphoryl group from ATP to 1-hydroxyl of ribose-5-phosphate (Rib-5-P). The chain is Ribose-phosphate pyrophosphokinase from Methanosarcina mazei (strain ATCC BAA-159 / DSM 3647 / Goe1 / Go1 / JCM 11833 / OCM 88) (Methanosarcina frisia).